The primary structure comprises 290 residues: Elongation factor Ts (290 aa).

The tract at residues 82–85 is involved in Mg(2+) ion dislocation from EF-Tu; the sequence is TDFV.

The protein belongs to the EF-Ts family.

It is found in the cytoplasm. In terms of biological role, associates with the EF-Tu.GDP complex and induces the exchange of GDP to GTP. It remains bound to the aminoacyl-tRNA.EF-Tu.GTP complex up to the GTP hydrolysis stage on the ribosome. This Thiobacillus denitrificans (strain ATCC 25259 / T1) protein is Elongation factor Ts.